Reading from the N-terminus, the 122-residue chain is Large ribosomal subunit protein uL18 (122 aa).

A disordered region spans residues 1–25 (MSQISRKQQTQKRHRRLRRHITGTS). Positions 9–21 (QTQKRHRRLRRHI) are enriched in basic residues.

Belongs to the universal ribosomal protein uL18 family. In terms of assembly, part of the 50S ribosomal subunit; part of the 5S rRNA/L5/L18/L25 subcomplex. Contacts the 5S and 23S rRNAs.

This is one of the proteins that bind and probably mediate the attachment of the 5S RNA into the large ribosomal subunit, where it forms part of the central protuberance. In Synechococcus sp. (strain CC9605), this protein is Large ribosomal subunit protein uL18.